The sequence spans 408 residues: uncharacterized protein (408 aa).

Residues glutamate 35, aspartate 61, and asparagine 96 each contribute to the a divalent metal cation site.

It belongs to the metallophosphoesterase superfamily. A divalent metal cation serves as cofactor.

This is an uncharacterized protein from Bacillus subtilis (strain 168).